Consider the following 361-residue polypeptide: Nicotinate-nucleotide--dimethylbenzimidazole phosphoribosyltransferase (361 aa).

Glu320 (proton acceptor) is an active-site residue.

It belongs to the CobT family. In terms of assembly, homodimer.

The enzyme catalyses 5,6-dimethylbenzimidazole + nicotinate beta-D-ribonucleotide = alpha-ribazole 5'-phosphate + nicotinate + H(+). It participates in nucleoside biosynthesis; alpha-ribazole biosynthesis; alpha-ribazole from 5,6-dimethylbenzimidazole: step 1/2. Catalyzes the synthesis of alpha-ribazole-5'-phosphate from nicotinate mononucleotide (NAMN) and 5,6-dimethylbenzimidazole (DMB). The protein is Nicotinate-nucleotide--dimethylbenzimidazole phosphoribosyltransferase of Shigella boydii serotype 18 (strain CDC 3083-94 / BS512).